Here is a 175-residue protein sequence, read N- to C-terminus: Outer membrane protein assembly factor BamE (175 aa).

A signal peptide spans 1–21 (MQNTKLLLTSFTFVGLLALAG). Cys-22 is lipidated: N-palmitoyl cysteine. A lipid anchor (S-diacylglycerol cysteine) is attached at Cys-22. Disordered regions lie at residues 117–147 (ALLGKDSGTNVTAPAQEAEKPKSEVPAKPGS) and 156–175 (IDNVETVPVPTPEPLDTSPQ).

It belongs to the BamE family. In terms of assembly, part of the Bam complex.

The protein resides in the cell outer membrane. In terms of biological role, part of the outer membrane protein assembly complex, which is involved in assembly and insertion of beta-barrel proteins into the outer membrane. May have a structural role in maintaining the cell envelope integrity. This chain is Outer membrane protein assembly factor BamE, found in Pseudomonas fluorescens.